Consider the following 684-residue polypeptide: Protein-glutamine gamma-glutamyltransferase 4 (684 aa).

Catalysis depends on residues C268, H327, and D350. Ca(2+) is bound by residues N390, D392, E442, and E447.

The protein belongs to the transglutaminase superfamily. Transglutaminase family. Homodimer. Requires Ca(2+) as cofactor. Prostate.

It catalyses the reaction L-glutaminyl-[protein] + L-lysyl-[protein] = [protein]-L-lysyl-N(6)-5-L-glutamyl-[protein] + NH4(+). Associated with the mammalian reproductive process. Catalyzes the cross-linking of proteins and the conjugation of polyamines to specific proteins in the seminal tract. This chain is Protein-glutamine gamma-glutamyltransferase 4 (TGM4), found in Homo sapiens (Human).